A 295-amino-acid chain; its full sequence is Nucleotide-binding protein llmg_1557 (295 aa).

ATP is bound at residue 12 to 19 (GMSGAGKT). A GTP-binding site is contributed by 63-66 (DMRS).

This sequence belongs to the RapZ-like family.

Displays ATPase and GTPase activities. This is Nucleotide-binding protein llmg_1557 from Lactococcus lactis subsp. cremoris (strain MG1363).